We begin with the raw amino-acid sequence, 361 residues long: Probable U3 small nucleolar RNA-associated protein 11 (361 aa).

Disordered stretches follow at residues 1 to 52 (MTKG…KKRK), 200 to 235 (LMSGGHQIKSAAQKRKERREVQEKMRRSGADATPET), 262 to 295 (KRESEATASSSKGAPGDDGEQEEAAAQDEVTRLL), and 311 to 361 (RHVR…RRAR). Over residues 17-33 (HLKRKTHLERSQPKSRQ) the composition is skewed to basic residues. Basic and acidic residues-rich tracts occupy residues 37-46 (QLEKHKDHVL) and 217-228 (RREVQEKMRRSG). Acidic residues predominate over residues 278–287 (DDGEQEEAAA). Residues 342–352 (RQMEQRRESRF) are compositionally biased toward basic and acidic residues.

Belongs to the UTP11 family. As to quaternary structure, component of the ribosomal small subunit (SSU) processome.

It is found in the nucleus. Its subcellular location is the nucleolus. Its function is as follows. Involved in nucleolar processing of pre-18S ribosomal RNA. This is Probable U3 small nucleolar RNA-associated protein 11 from Leishmania major.